The chain runs to 521 residues: Nitric oxide reductase transcription regulator NorR2 (521 aa).

Asp-56 carries the 4-aspartylphosphate modification. A Sigma-54 factor interaction domain is found at 193-422 (IIGQSEAIAN…LEHVISRAAL (230 aa)). ATP is bound by residues 221–228 (GETGVGKE) and 293–302 (EVGELPLAIQ). A DNA-binding region (H-T-H motif) is located at residues 497 to 516 (WAQAARQLGIDASNLHKLAR).

Its pathway is nitrogen metabolism; nitrate reduction (denitrification) [regulation]. Functionally, required for the nitric oxide (NO) induced expression of NO reductase. Not required for expression of 2 other pathway members, nitrate reductase (nirS) and nitrous oxide reductase (nosZ). This Cupriavidus necator (strain ATCC 17699 / DSM 428 / KCTC 22496 / NCIMB 10442 / H16 / Stanier 337) (Ralstonia eutropha) protein is Nitric oxide reductase transcription regulator NorR2 (norR2).